The chain runs to 408 residues: Imidazolonepropionase (408 aa).

H73 and H75 together coordinate Fe(3+). Positions 73 and 75 each coordinate Zn(2+). Positions 82, 145, and 178 each coordinate 4-imidazolone-5-propanoate. Y145 is an N-formimidoyl-L-glutamate binding site. H243 serves as a coordination point for Fe(3+). A Zn(2+)-binding site is contributed by H243. Q246 is a binding site for 4-imidazolone-5-propanoate. D318 lines the Fe(3+) pocket. Residue D318 coordinates Zn(2+). Residues N320 and G322 each coordinate N-formimidoyl-L-glutamate. S323 provides a ligand contact to 4-imidazolone-5-propanoate.

Belongs to the metallo-dependent hydrolases superfamily. HutI family. The cofactor is Zn(2+). Requires Fe(3+) as cofactor.

Its subcellular location is the cytoplasm. The enzyme catalyses 4-imidazolone-5-propanoate + H2O = N-formimidoyl-L-glutamate. It functions in the pathway amino-acid degradation; L-histidine degradation into L-glutamate; N-formimidoyl-L-glutamate from L-histidine: step 3/3. Its function is as follows. Catalyzes the hydrolytic cleavage of the carbon-nitrogen bond in imidazolone-5-propanoate to yield N-formimidoyl-L-glutamate. It is the third step in the universal histidine degradation pathway. This chain is Imidazolonepropionase, found in Shewanella baltica (strain OS195).